Consider the following 71-residue polypeptide: uncharacterized protein (71 aa).

A helical transmembrane segment spans residues 2-24 (IIAIVAVVIFLLNFLTPYGYMPM). The interval 48 to 71 (PAESSSNGGSMITKPSTGACQGGR) is disordered. A compositionally biased stretch (polar residues) spans 49–71 (AESSSNGGSMITKPSTGACQGGR).

It is found in the membrane. This is an uncharacterized protein from Archaeoglobus fulgidus (strain ATCC 49558 / DSM 4304 / JCM 9628 / NBRC 100126 / VC-16).